A 339-amino-acid chain; its full sequence is DNA-directed RNA polymerase subunit alpha (339 aa).

Residues 1–235 (MTIQKNWQEL…DQLNVFVNFE (235 aa)) form an alpha N-terminal domain (alpha-NTD) region. Positions 251-339 (FNPAFLKKVD…ELAKRFEDHY (89 aa)) are alpha C-terminal domain (alpha-CTD).

Belongs to the RNA polymerase alpha chain family. In terms of assembly, homodimer. The RNAP catalytic core consists of 2 alpha, 1 beta, 1 beta' and 1 omega subunit. When a sigma factor is associated with the core the holoenzyme is formed, which can initiate transcription.

The catalysed reaction is RNA(n) + a ribonucleoside 5'-triphosphate = RNA(n+1) + diphosphate. Its function is as follows. DNA-dependent RNA polymerase catalyzes the transcription of DNA into RNA using the four ribonucleoside triphosphates as substrates. This chain is DNA-directed RNA polymerase subunit alpha, found in Rhodopseudomonas palustris (strain ATCC BAA-98 / CGA009).